The primary structure comprises 314 residues: MKQYLDLEKYVLENGTQKGDRTGTGTISTFGYQMRFDLQEGFPIMTTKRVPFKLVVSELLWFLHGDTNIRYLLQHNNNIWNEWAFERFVKSADYKGEDMTDFGLRAERDPAFKEVYQAEMEKFKTRILEDETFANKYGELGNIYGKQWREWKTSQGETIDQLADLIEMIKTNPNSRRLIVSAWNPEDIPNMALPPCHSLFQFYVADGKLSCQLYQRSADIFLGVPFNIASYALLTHLIAREVGLDVGEFIHTMGDAHLYNNHIEQVKEQLSRTPHALPKLVLSDKPATIFDFEVADISLDGYNPDPAIKAPISV.

DUMP-binding positions include arginine 21 and arginine 176–arginine 177. Residue cysteine 196 is the Nucleophile of the active site. Residues arginine 216–aspartate 219, asparagine 227, and histidine 257–tyrosine 259 each bind dUMP. Residue aspartate 219 coordinates (6R)-5,10-methylene-5,6,7,8-tetrahydrofolate. Serine 313 is a (6R)-5,10-methylene-5,6,7,8-tetrahydrofolate binding site.

Belongs to the thymidylate synthase family. Bacterial-type ThyA subfamily. Homodimer.

The protein resides in the cytoplasm. The catalysed reaction is dUMP + (6R)-5,10-methylene-5,6,7,8-tetrahydrofolate = 7,8-dihydrofolate + dTMP. Its pathway is pyrimidine metabolism; dTTP biosynthesis. Its function is as follows. Catalyzes the reductive methylation of 2'-deoxyuridine-5'-monophosphate (dUMP) to 2'-deoxythymidine-5'-monophosphate (dTMP) while utilizing 5,10-methylenetetrahydrofolate (mTHF) as the methyl donor and reductant in the reaction, yielding dihydrofolate (DHF) as a by-product. This enzymatic reaction provides an intracellular de novo source of dTMP, an essential precursor for DNA biosynthesis. The chain is Thymidylate synthase from Listeria innocua serovar 6a (strain ATCC BAA-680 / CLIP 11262).